The primary structure comprises 346 residues: Cobalt transport protein CbiM (346 aa).

Residues 1-25 form the signal peptide; that stretch reads MKRITLYAAGSAIIGAMLLAGPAHA. Transmembrane regions (helical) follow at residues 31-51, 68-88, 101-121, 133-153, 159-179, 196-216, 255-275, and 312-332; these read GILPLGWAALWFAVAAPFLAL, PLVGLMAAVVFIISCMPIPVP, IAAILVGPLVSVVITTVALLI, TLGADVVSMGVAGSFAGWFVF, LGAGLAVAAFVAGLLADWATY, FYPLFLKIVAAFVPTQLPLGV, ATVVMLALFCLLASLLVAGPS, and LLLFVFLLAGTVGGFAAGYFW.

This sequence belongs to the CbiM family. In terms of assembly, forms an energy-coupling factor (ECF) transporter complex composed of an ATP-binding protein (A component, CbiO), a transmembrane protein (T component, CbiQ) and 2 possible substrate-capture proteins (S components, CbiM and CbiN) of unknown stoichimetry.

The protein resides in the cell inner membrane. The protein operates within cofactor biosynthesis; adenosylcobalamin biosynthesis. Its function is as follows. Part of the energy-coupling factor (ECF) transporter complex CbiMNOQ involved in cobalt import. In Geobacter sulfurreducens (strain ATCC 51573 / DSM 12127 / PCA), this protein is Cobalt transport protein CbiM.